Here is a 337-residue protein sequence, read N- to C-terminus: Nodulation protein D 2 (337 aa).

An HTH lysR-type domain is found at 6–63 (LDLNLLVVLDSLMTARNLTAAARSINLSQPAMSAAVARLRAYFGDELFTMRGRTLVPT). The H-T-H motif DNA-binding region spans 23–42 (LTAAARSINLSQPAMSAAVA).

Belongs to the LysR transcriptional regulatory family.

Its function is as follows. NodD regulates the expression of the nodABCFE genes which encode other nodulation proteins. NodD is also a negative regulator of its own expression. Binds flavonoids as inducers. This chain is Nodulation protein D 2 (nodD2), found in Bradyrhizobium sp. (strain NC92).